Here is a 138-residue protein sequence, read N- to C-terminus: Phosphoribosyl-AMP cyclohydrolase (138 aa).

Asp86 contributes to the Mg(2+) binding site. Cys87 is a binding site for Zn(2+). Positions 88 and 90 each coordinate Mg(2+). 2 residues coordinate Zn(2+): Cys104 and Cys111.

It belongs to the PRA-CH family. Homodimer. Mg(2+) is required as a cofactor. Zn(2+) serves as cofactor.

Its subcellular location is the cytoplasm. It catalyses the reaction 1-(5-phospho-beta-D-ribosyl)-5'-AMP + H2O = 1-(5-phospho-beta-D-ribosyl)-5-[(5-phospho-beta-D-ribosylamino)methylideneamino]imidazole-4-carboxamide. It participates in amino-acid biosynthesis; L-histidine biosynthesis; L-histidine from 5-phospho-alpha-D-ribose 1-diphosphate: step 3/9. Functionally, catalyzes the hydrolysis of the adenine ring of phosphoribosyl-AMP. This is Phosphoribosyl-AMP cyclohydrolase from Marinobacter nauticus (strain ATCC 700491 / DSM 11845 / VT8) (Marinobacter aquaeolei).